The primary structure comprises 573 residues: Ribonuclease J (573 aa).

Residues 1–29 are disordered; the sequence is MENQERKPRRRRRRRPQEGSQGGPQDHVE. Zn(2+)-binding residues include His-93, His-95, Asp-97, His-98, His-168, and Asp-190. Substrate contacts are provided by residues 259 to 261 and 390 to 394; these read ASH and HASGH. His-416 contributes to the Zn(2+) binding site.

Belongs to the metallo-beta-lactamase superfamily. RNA-metabolizing metallo-beta-lactamase-like family. Bacterial RNase J subfamily. As to quaternary structure, homodimer. May be a subunit of the RNA degradosome. Requires Zn(2+) as cofactor.

Its subcellular location is the cytoplasm. Its function is as follows. An RNase that has endonuclease and possibly 5'-3' exonuclease activity. Probably involved in maturation of rRNA and in some organisms also mRNA maturation and/or decay. The sequence is that of Ribonuclease J from Thermus thermophilus (strain ATCC BAA-163 / DSM 7039 / HB27).